The sequence spans 313 residues: Glyoxylate/hydroxypyruvate reductase A (313 aa).

The active site involves R228. Catalysis depends on H276, which acts as the Proton donor.

The protein belongs to the D-isomer specific 2-hydroxyacid dehydrogenase family. GhrA subfamily.

Its subcellular location is the cytoplasm. It carries out the reaction glycolate + NADP(+) = glyoxylate + NADPH + H(+). The enzyme catalyses (R)-glycerate + NAD(+) = 3-hydroxypyruvate + NADH + H(+). It catalyses the reaction (R)-glycerate + NADP(+) = 3-hydroxypyruvate + NADPH + H(+). Catalyzes the NADPH-dependent reduction of glyoxylate and hydroxypyruvate into glycolate and glycerate, respectively. This Serratia proteamaculans (strain 568) protein is Glyoxylate/hydroxypyruvate reductase A.